The primary structure comprises 131 residues: Ribonuclease VapC3 (131 aa).

One can recognise a PINc domain in the interval 4–121 (VVDASAIAAL…GKLLTLDRQL (118 aa)). Mg(2+) is bound by residues Asp6, Asp100, and Asp118.

Belongs to the PINc/VapC protein family. As to quaternary structure, homodimer. Forms a complex with putative antitoxin VapB3, possibly VapB(2)-VapC(2). Requires Mg(2+) as cofactor.

With respect to regulation, inhibited by EDTA. Functionally, toxic component of a type II toxin-antitoxin (TA) system. Has ribonuclease activity. In Pyrobaculum aerophilum (strain ATCC 51768 / DSM 7523 / JCM 9630 / CIP 104966 / NBRC 100827 / IM2), this protein is Ribonuclease VapC3.